Reading from the N-terminus, the 350-residue chain is Histidinol-phosphate aminotransferase 1 (350 aa).

N6-(pyridoxal phosphate)lysine is present on Lys210.

This sequence belongs to the class-II pyridoxal-phosphate-dependent aminotransferase family. Histidinol-phosphate aminotransferase subfamily. Homodimer. The cofactor is pyridoxal 5'-phosphate.

It catalyses the reaction L-histidinol phosphate + 2-oxoglutarate = 3-(imidazol-4-yl)-2-oxopropyl phosphate + L-glutamate. It participates in amino-acid biosynthesis; L-histidine biosynthesis; L-histidine from 5-phospho-alpha-D-ribose 1-diphosphate: step 7/9. The polypeptide is Histidinol-phosphate aminotransferase 1 (Pseudomonas fluorescens (strain Pf0-1)).